Here is a 218-residue protein sequence, read N- to C-terminus: Sodium channel regulatory subunit beta-1 (218 aa).

The N-terminal stretch at 1–18 (MGRLLALVVGAALVSSAC) is a signal peptide. The Extracellular portion of the chain corresponds to 19-157 (GGCVEVDSET…DKANRDMASI (139 aa)). Intrachain disulfides connect cysteine 21-cysteine 43 and cysteine 40-cysteine 121. Positions 22–150 (VEVDSETEAV…KIHIEVVDKA (129 aa)) constitute an Ig-like C2-type domain. 4 N-linked (GlcNAc...) asparagine glycosylation sites follow: asparagine 93, asparagine 110, asparagine 114, and asparagine 135. Residues 158–179 (VSEIMMYVLIVVLTIWLVAEMI) traverse the membrane as a helical segment. The Cytoplasmic segment spans residues 180–218 (YCYKKIAAATETAAQENASEYLAITSESKENCTGVQVAE).

The protein belongs to the sodium channel auxiliary subunit SCN1B (TC 8.A.17) family. As to quaternary structure, voltage-gated sodium (Nav) channel consists of an ion-conducting pore-forming alpha subunit functional on its own that is regulated by one or more beta subunits. Interacts with SCN1A; regulatory subunit of SCN1A/Nav1.1. Interacts with SCN3A; regulatory subunit of SCN3A/Nav1.3. Interacts with SCN4A; regulatory subunit of SCN4A/Nav1.4. Interacts with SCN5A; regulatory subunit of SCN5A/Nav1.5. Interacts with SCN8A; regulatory subunit of SCN8A/Nav1.6. Interacts with SCN9A; regulatory subunit of SCN9A/Nav1.7. Interacts with SCN10A; regulatory subunit of SCN10A/Nav1.8. Interacts with NFASC. Interacts with TMEM65. As to expression, the overall expression of isoform 1 and isoform 2 is very similar. Isoform 1 is abundantly expressed in skeletal muscle, heart and brain. Isoform 2 is highly expressed in brain and skeletal muscle and present at a very low level in heart, placenta, lung, liver, kidney and pancreas. In brain, isoform 2 is most abundant in the cerebellum, followed by the cerebral cortex and occipital lobe, while isoform 1 levels are higher in the cortex compared to the cerebellum. Isoform 2 is expressed in many regions of the brain, including cerebellar Purkinje cells, cortex pyramidal neurons and many of the neuronal fibers throughout the brain (at protein level). Also detected in dorsal root ganglion, in fibers of the spinal nerve and in cortical neurons and their processes (at protein level).

It localises to the cell membrane. It is found in the perikaryon. The protein localises to the cell projection. Its subcellular location is the axon. The protein resides in the secreted. Its function is as follows. Regulatory subunit of multiple voltage-gated sodium (Nav) channels directly mediating the depolarization of excitable membranes. Navs, also called VGSCs (voltage-gated sodium channels) or VDSCs (voltage-dependent sodium channels), operate by switching between closed and open conformations depending on the voltage difference across the membrane. In the open conformation they allow Na(+) ions to selectively pass through the pore, along their electrochemical gradient. The influx of Na+ ions provokes membrane depolarization, initiating the propagation of electrical signals throughout cells and tissues. The accessory beta subunits participate in localization and functional modulation of the Nav channels. Modulates the activity of SCN1A/Nav1.1, SCN2A/Nav1.2, SCN3A/Nav1.3, SCN4A/Nav1.4, SCN5A/Nav1.5, SCN8A/Nav1.6, SCN9A/Nav1.7 and SCN10A/Nav1.8. In terms of biological role, cell adhesion molecule that plays a critical role in neuronal migration and pathfinding during brain development. Stimulates neurite outgrowth. Has no regulatory function on the SCN2A sodium channel complex. The polypeptide is Sodium channel regulatory subunit beta-1 (Homo sapiens (Human)).